A 216-amino-acid chain; its full sequence is UPF0134 protein MPN_344 (216 aa).

The span at 47–62 shows a compositional bias: basic and acidic residues; it reads FTIIEDQQDRPDKPEE. Disordered regions lie at residues 47 to 104 and 194 to 216; these read FTII…PKPD and GKMDKMESRMDKMETRLDKLESK. Residues 68–78 are compositionally biased toward pro residues; sequence IPKPPKPPKGP. The segment covering 83–93 has biased composition (low complexity); the sequence is EPGQPGGPDDP.

It belongs to the UPF0134 family.

The sequence is that of UPF0134 protein MPN_344 from Mycoplasma pneumoniae (strain ATCC 29342 / M129 / Subtype 1) (Mycoplasmoides pneumoniae).